Here is a 434-residue protein sequence, read N- to C-terminus: Methylenetetrahydrofolate--tRNA-(uracil-5-)-methyltransferase TrmFO (434 aa).

9–14 (GAGLAG) lines the FAD pocket.

The protein belongs to the MnmG family. TrmFO subfamily. The cofactor is FAD.

The protein resides in the cytoplasm. The enzyme catalyses uridine(54) in tRNA + (6R)-5,10-methylene-5,6,7,8-tetrahydrofolate + NADH + H(+) = 5-methyluridine(54) in tRNA + (6S)-5,6,7,8-tetrahydrofolate + NAD(+). It catalyses the reaction uridine(54) in tRNA + (6R)-5,10-methylene-5,6,7,8-tetrahydrofolate + NADPH + H(+) = 5-methyluridine(54) in tRNA + (6S)-5,6,7,8-tetrahydrofolate + NADP(+). Its function is as follows. Catalyzes the folate-dependent formation of 5-methyl-uridine at position 54 (M-5-U54) in all tRNAs. This is Methylenetetrahydrofolate--tRNA-(uracil-5-)-methyltransferase TrmFO from Bacillus licheniformis (strain ATCC 14580 / DSM 13 / JCM 2505 / CCUG 7422 / NBRC 12200 / NCIMB 9375 / NCTC 10341 / NRRL NRS-1264 / Gibson 46).